Reading from the N-terminus, the 27-residue chain is Conotoxin (27 aa).

3 cysteine pairs are disulfide-bonded: cysteine 2-cysteine 16, cysteine 6-cysteine 18, and cysteine 12-cysteine 23. Asparagine 27 bears the Asparagine amide mark.

Expressed by the venom duct.

It is found in the secreted. Functionally, probable neurotoxin that inhibits ion channels. The protein is Conotoxin of Conus amadis (Amadis cone).